Here is a 474-residue protein sequence, read N- to C-terminus: L-arabinose isomerase (474 aa).

Mn(2+) is bound by residues E306, E331, H348, and H447.

This sequence belongs to the arabinose isomerase family. Mn(2+) is required as a cofactor.

It catalyses the reaction beta-L-arabinopyranose = L-ribulose. It functions in the pathway carbohydrate degradation; L-arabinose degradation via L-ribulose; D-xylulose 5-phosphate from L-arabinose (bacterial route): step 1/3. Catalyzes the conversion of L-arabinose to L-ribulose. The polypeptide is L-arabinose isomerase (Lactiplantibacillus plantarum (strain ATCC BAA-793 / NCIMB 8826 / WCFS1) (Lactobacillus plantarum)).